A 79-amino-acid chain; its full sequence is Acyl carrier protein (79 aa).

Residues 2-77 (STIEERVKKI…QAIDYVKSHV (76 aa)) enclose the Carrier domain. Ser37 is subject to O-(pantetheine 4'-phosphoryl)serine.

The protein belongs to the acyl carrier protein (ACP) family. In terms of processing, 4'-phosphopantetheine is transferred from CoA to a specific serine of apo-ACP by AcpS. This modification is essential for activity because fatty acids are bound in thioester linkage to the sulfhydryl of the prosthetic group.

Its subcellular location is the cytoplasm. The protein operates within lipid metabolism; fatty acid biosynthesis. In terms of biological role, carrier of the growing fatty acid chain in fatty acid biosynthesis. The polypeptide is Acyl carrier protein (Xanthomonas oryzae pv. oryzae (strain MAFF 311018)).